The primary structure comprises 415 residues: Tyrosine--tRNA ligase (415 aa).

Tyr34 lines the L-tyrosine pocket. The 'HIGH' region signature appears at 39–48 (PTADSLHLGH). L-tyrosine is bound by residues Tyr164 and Gln168. Positions 226 to 230 (KFGKS) match the 'KMSKS' region motif. An ATP-binding site is contributed by Lys229. The 68-residue stretch at 348–415 (KNVVDFLVDG…KKKYFLGKVK (68 aa)) folds into the S4 RNA-binding domain.

The protein belongs to the class-I aminoacyl-tRNA synthetase family. TyrS type 1 subfamily. Homodimer.

The protein localises to the cytoplasm. It catalyses the reaction tRNA(Tyr) + L-tyrosine + ATP = L-tyrosyl-tRNA(Tyr) + AMP + diphosphate + H(+). Functionally, catalyzes the attachment of tyrosine to tRNA(Tyr) in a two-step reaction: tyrosine is first activated by ATP to form Tyr-AMP and then transferred to the acceptor end of tRNA(Tyr). This chain is Tyrosine--tRNA ligase, found in Leuconostoc mesenteroides subsp. mesenteroides (strain ATCC 8293 / DSM 20343 / BCRC 11652 / CCM 1803 / JCM 6124 / NCDO 523 / NBRC 100496 / NCIMB 8023 / NCTC 12954 / NRRL B-1118 / 37Y).